Here is a 117-residue protein sequence, read N- to C-terminus: Large ribosomal subunit protein bL19 (117 aa).

It belongs to the bacterial ribosomal protein bL19 family.

Its function is as follows. This protein is located at the 30S-50S ribosomal subunit interface and may play a role in the structure and function of the aminoacyl-tRNA binding site. The sequence is that of Large ribosomal subunit protein bL19 from Bacteroides thetaiotaomicron (strain ATCC 29148 / DSM 2079 / JCM 5827 / CCUG 10774 / NCTC 10582 / VPI-5482 / E50).